The sequence spans 626 residues: Membrane protein insertase YidC (626 aa).

5 consecutive transmembrane segments (helical) span residues leucine 8–proline 28, methionine 399–tyrosine 419, leucine 469–leucine 489, serine 527–leucine 547, and isoleucine 563–leucine 583.

The protein belongs to the OXA1/ALB3/YidC family. Type 1 subfamily. In terms of assembly, interacts with the Sec translocase complex via SecD. Specifically interacts with transmembrane segments of nascent integral membrane proteins during membrane integration.

It is found in the cell inner membrane. Required for the insertion and/or proper folding and/or complex formation of integral membrane proteins into the membrane. Involved in integration of membrane proteins that insert both dependently and independently of the Sec translocase complex, as well as at least some lipoproteins. Aids folding of multispanning membrane proteins. The chain is Membrane protein insertase YidC from Jannaschia sp. (strain CCS1).